Reading from the N-terminus, the 589-residue chain is Ectoderm-neural cortex protein 1 (589 aa).

A BTB domain is found at 46 to 114 (TDVLLHAGNR…AYSSRVIINE (69 aa)). 6 Kelch repeats span residues 296 to 340 (ALFL…AIGC), 341 to 388 (KVYI…ELKH), 389 to 444 (CLYV…SAKL), 446 to 492 (LFAF…VLGN), 494 to 538 (IFIM…ASGN), and 539 to 585 (KLYV…STWK).

As to quaternary structure, binds to RB1. Hypophosphorylated RB1 associates with ENC1 during neuronal differentiation, while hyperphosphorylated RB1 associates with ENC1 in undifferentiating cells. Part of a complex that contains CUL3, RBX1 and ENC1. Interacts indirectly with KEAP1. Post-translationally, ubiquitinated by E3 ubiquitin ligase complex formed by CUL3 and RBX1 and probably targeted for proteasome-independent degradation. Quinone-induced oxidative stress increases its ubiquitination. As to expression, detected in fetal brain tissue, moderate expression in fetal heart, lung and kidney. Highly expressed in adult brain, particularly high in the hippocampus and amygdala, and spinal cord. Detectable in adult pancreas. May be down-regulated in neuroblastoma tumors.

It localises to the nucleus matrix. Its subcellular location is the cytoplasm. The protein resides in the cytoskeleton. Its function is as follows. Actin-binding protein involved in the regulation of neuronal process formation and in differentiation of neural crest cells. Down-regulates transcription factor NF2L2/NRF2 by decreasing the rate of protein synthesis and not via a ubiquitin-mediated proteasomal degradation mechanism. In Homo sapiens (Human), this protein is Ectoderm-neural cortex protein 1 (ENC1).